The sequence spans 396 residues: Elongation factor Tu (396 aa).

Positions 10 to 205 constitute a tr-type G domain; that stretch reads KPHVNIGTIG…AVDESIPDPV (196 aa). Positions 19–26 are G1; sequence GHVDHGKT. 19–26 is a GTP binding site; it reads GHVDHGKT. A Mg(2+)-binding site is contributed by Thr26. A G2 region spans residues 62–66; the sequence is GITIN. Positions 83–86 are G3; sequence DAPG. Residues 83–87 and 138–141 each bind GTP; these read DAPGH and NKAD. The interval 138–141 is G4; that stretch reads NKAD. A G5 region spans residues 175-177; that stretch reads SAL.

The protein belongs to the TRAFAC class translation factor GTPase superfamily. Classic translation factor GTPase family. EF-Tu/EF-1A subfamily. Monomer.

It is found in the cytoplasm. It carries out the reaction GTP + H2O = GDP + phosphate + H(+). Its function is as follows. GTP hydrolase that promotes the GTP-dependent binding of aminoacyl-tRNA to the A-site of ribosomes during protein biosynthesis. The chain is Elongation factor Tu from Rhodococcus erythropolis (strain PR4 / NBRC 100887).